We begin with the raw amino-acid sequence, 299 residues long: Fluorinase (299 aa).

S-adenosyl-L-methionine is bound by residues D16, 21-23, Y77, S158, D210, N215, 269-270, and 277-279; these read DDS, SR, and RNA.

In terms of assembly, homohexamer; dimers of trimer.

It catalyses the reaction fluoride + S-adenosyl-L-methionine = 5'-deoxy-5'-fluoroadenosine + L-methionine. Competitively inhibited by S-adenosyl-L-homocysteine (AdoHcy) and S-adenosyl-L-homocysteine (SAH). Sinefungin is only weakly inhibitory. Functionally, involved in the biosynthesis of fluorometabolites. Catalyzes the formation of a C-F bond by combining S-adenosyl-L-methionine (SAM) and fluoride to generate 5'-fluoro-5'-deoxyadenosine (5'-FDA) and L-methionine. It can also use 2'-deoxyadenosine in place of adenosine as substrate. This chain is Fluorinase, found in Streptantibioticus cattleyicolor (Streptomyces cattleya).